Here is a 242-residue protein sequence, read N- to C-terminus: Polycomb group RING finger protein 3 (242 aa).

Residues 17 to 56 (CRLCSGYLIDATTVTECLHTFCRSCLVKYLEENNTCPTCR) form an RING-type zinc finger. The disordered stretch occupies residues 115–149 (AKQHLDPHRNGETKADDSSNKEAAEEKQEEDGDYH). Positions 117–140 (QHLDPHRNGETKADDSSNKEAAEE) are enriched in basic and acidic residues. Residues 132–242 (SSNKEAAEEK…LHYRPKMDLL (111 aa)) are interaction with BCORL1.

Component of a PRC1-like complex that contains PCGF3, RNF2 and RYBP. Interacts with CBX6, CBX7 and CBX8. Interacts with BCORL1.

The protein localises to the nucleus. The protein resides in the nucleoplasm. Functionally, component of a Polycomb group (PcG) multiprotein PRC1-like complex, a complex class required to maintain the transcriptionally repressive state of many genes, including Hox genes, throughout development. PcG PRC1 complex acts via chromatin remodeling and modification of histones; it mediates monoubiquitination of histone H2A 'Lys-119', rendering chromatin heritably changed in its expressibility. Within the PRC1-like complex, regulates RNF2 ubiquitin ligase activity. Plays a redundant role with PCGF5 as part of a PRC1-like complex that mediates monoubiquitination of histone H2A 'Lys-119' on the X chromosome and is required for normal silencing of one copy of the X chromosome in XX females. The protein is Polycomb group RING finger protein 3 (PCGF3) of Bos taurus (Bovine).